Consider the following 119-residue polypeptide: U9-hexatoxin-Hi1 (119 aa).

Positions 1–17 (MKLYLVILVTSVALAAA) are cleaved as a signal peptide. Positions 18 to 53 (SPTRTKEEPIEDELLEALLSVEKSLFNEETTVMEKR) are excised as a propeptide. 4 disulfide bridges follow: Cys55/Cys73, Cys66/Cys79, Cys70/Cys117, and Cys72/Cys88.

Belongs to the neurotoxin 03 (Tx2) family. 03 subfamily. Expressed by the venom gland.

The protein localises to the secreted. Its function is as follows. Probable ion channel inhibitor. In Hadronyche infensa (Fraser island funnel-web spider), this protein is U9-hexatoxin-Hi1.